Reading from the N-terminus, the 455-residue chain is Ribosomal protein uS12 methylthiotransferase RimO (455 aa).

The region spanning 21–131 (GKVGFISLGC…VVGAVHQYVP (111 aa)) is the MTTase N-terminal domain. Cysteine 30, cysteine 66, cysteine 95, cysteine 164, cysteine 168, and cysteine 171 together coordinate [4Fe-4S] cluster. Residues 150-387 (LTPRHYAYLK…MAKQAEISAA (238 aa)) form the Radical SAM core domain. One can recognise a TRAM domain in the interval 390 to 455 (QAKIGRTIDV…DEHDLWARLI (66 aa)).

It belongs to the methylthiotransferase family. RimO subfamily. It depends on [4Fe-4S] cluster as a cofactor.

It is found in the cytoplasm. The enzyme catalyses L-aspartate(89)-[ribosomal protein uS12]-hydrogen + (sulfur carrier)-SH + AH2 + 2 S-adenosyl-L-methionine = 3-methylsulfanyl-L-aspartate(89)-[ribosomal protein uS12]-hydrogen + (sulfur carrier)-H + 5'-deoxyadenosine + L-methionine + A + S-adenosyl-L-homocysteine + 2 H(+). Its function is as follows. Catalyzes the methylthiolation of an aspartic acid residue of ribosomal protein uS12. The polypeptide is Ribosomal protein uS12 methylthiotransferase RimO (Marinobacter nauticus (strain ATCC 700491 / DSM 11845 / VT8) (Marinobacter aquaeolei)).